Reading from the N-terminus, the 389-residue chain is (S)-8-oxocitronellyl enol synthase CYC1 (389 aa).

Residues 34 to 36 (TGI), 62 to 63 (RR), 80 to 81 (DV), 104 to 105 (AW), and glutamine 138 contribute to the NADP(+) site. Catalysis depends on residues lysine 142 and tyrosine 174. The substrate site is built by lysine 142 and tyrosine 174. NADP(+) is bound by residues tyrosine 174, valine 201, and 208–210 (SMM). Residue serine 350 participates in substrate binding.

This sequence belongs to the short-chain dehydrogenases/reductases (SDR) family. Highly divergent.

The catalysed reaction is (S)-8-oxocitronellyl enol + NADP(+) = (6E)-8-oxogeranial + NADPH + H(+). It carries out the reaction (S)-8-oxocitronellyl enol + NAD(+) = (6E)-8-oxogeranial + NADH + H(+). Its function is as follows. Iridoid synthase that catalyzes the first step in generation of the iridoid ring scaffold using the linear monoterpene (6E)-8-oxogeranial as substrate. Iridoids comprise a large family of distinctive bicyclic monoterpenes that possess a wide range of pharmacological activities, including anticancer, anti-inflammatory, antifungal and antibacterial activities. The polypeptide is (S)-8-oxocitronellyl enol synthase CYC1 (Camptotheca acuminata (Happy tree)).